Here is a 380-residue protein sequence, read N- to C-terminus: MAQNEGIPNGTLSAMVIDEDKCHADSTCSMICTQLNFCVTVFTSPIKALDFLQNQAEGVHLVLADVQMEEMNGFEFLKVARELHKSIQVIMMSTETTIYTMKRCVQLGAQILVKKPLDVVTIQNLWQHLDIKVLKMEKIKDMLQGVGDKSTCANEMNSFPENQKDGTKRKYYLMWTPHLQKKFLHALEILGEGQISLMIMDVDNIDRKQISTHLQKHRLQLKKKLSKASFTKGSNEDTSNPSAKNHLTCRTMTLQPHPYTNQPAETTMQIHSEDVEHDDIYDAMRRALQDGTAFDESKYSSDPFSNEDEDVVGDGYADKANAIDSSGDHYQVAVVLTTPHNVDYTQEIMNKVTTSDDVQVTRGGKATVSRLVDYSDSDSD.

The region spanning serine 13–aspartate 130 is the Response regulatory domain. At aspartate 65 the chain carries 4-aspartylphosphate. A DNA-binding region (myb-like GARP) is located at residues arginine 169–lysine 223. The segment at leucine 225–asparagine 245 is disordered. Polar residues predominate over residues alanine 228–asparagine 245.

This sequence belongs to the ARR family. Type-B subfamily. In terms of processing, two-component system major event consists of a His-to-Asp phosphorelay between a sensor histidine kinase (HK) and a response regulator (RR). In plants, the His-to-Asp phosphorelay involves an additional intermediate named Histidine-containing phosphotransfer protein (HPt). This multistep phosphorelay consists of a His-Asp-His-Asp sequential transfer of a phosphate group between first a His and an Asp of the HK protein, followed by the transfer to a conserved His of the HPt protein and finally the transfer to an Asp in the receiver domain of the RR protein.

It localises to the nucleus. Functionally, transcriptional activator that binds specific DNA sequence. Functions as a response regulator involved in His-to-Asp phosphorelay signal transduction system. Phosphorylation of the Asp residue in the receiver domain activates the ability of the protein to promote the transcription of target genes. May directly activate some type-A response regulators in response to cytokinins. This is Two-component response regulator ORR28 from Oryza sativa subsp. indica (Rice).